We begin with the raw amino-acid sequence, 390 residues long: 3-ketoacyl-CoA thiolase (390 aa).

Residue cysteine 95 is the Acyl-thioester intermediate of the active site. Catalysis depends on proton acceptor residues histidine 346 and cysteine 376.

This sequence belongs to the thiolase-like superfamily. Thiolase family. In terms of assembly, heterotetramer of two alpha chains (FadB) and two beta chains (FadA).

It is found in the cytoplasm. The catalysed reaction is an acyl-CoA + acetyl-CoA = a 3-oxoacyl-CoA + CoA. The protein operates within lipid metabolism; fatty acid beta-oxidation. Catalyzes the final step of fatty acid oxidation in which acetyl-CoA is released and the CoA ester of a fatty acid two carbons shorter is formed. In Psychrobacter sp. (strain PRwf-1), this protein is 3-ketoacyl-CoA thiolase.